Consider the following 139-residue polypeptide: UPF0310 protein RSal33209_2865 (139 aa).

Belongs to the UPF0310 family.

The protein is UPF0310 protein RSal33209_2865 of Renibacterium salmoninarum (strain ATCC 33209 / DSM 20767 / JCM 11484 / NBRC 15589 / NCIMB 2235).